A 104-amino-acid chain; its full sequence is Replication restart protein PriB (104 aa).

The 101-residue stretch at 1–101 (MTNRLVLSGT…LHAEQIDLID (101 aa)) folds into the SSB domain.

The protein belongs to the PriB family. In terms of assembly, homodimer. Interacts with PriA and DnaT. Component of the replication restart primosome. Primosome assembly occurs via a 'hand-off' mechanism. PriA binds to replication forks, subsequently PriB then DnaT bind; DnaT then displaces ssDNA to generate the helicase loading substrate.

Its function is as follows. Involved in the restart of stalled replication forks, which reloads the replicative helicase on sites other than the origin of replication; the PriA-PriB pathway is the major replication restart pathway. During primosome assembly it facilitates complex formation between PriA and DnaT on DNA; stabilizes PriA on DNA. Stimulates the DNA unwinding activity of PriA helicase. The sequence is that of Replication restart protein PriB from Enterobacter sp. (strain 638).